Consider the following 615-residue polypeptide: Angiotensin-converting enzyme (615 aa).

The N-terminal stretch at 1–17 (MRLFLLALLATLAVTQA) is a signal peptide. The Peptidase M2 domain occupies 19–607 (VKEEIQAKEY…IKNNVHIGWT (589 aa)). Residue Asn53 is glycosylated (N-linked (GlcNAc...) asparagine). A disulfide bridge links Cys133 with Cys141. Residues Asn196 and Asn311 are each glycosylated (N-linked (GlcNAc...) asparagine). The cysteines at positions 336 and 354 are disulfide-linked. His367 contributes to the Zn(2+) binding site. Residue Glu368 is the Proton acceptor of the active site. Zn(2+)-binding residues include His371 and Glu395. The Proton donor role is filled by His497. A disulfide bridge links Cys522 with Cys540.

This sequence belongs to the peptidase M2 family. Requires Zn(2+) as cofactor. Post-translationally, glycosylated. In terms of tissue distribution, expressed in vesicular structures in spermatocytes and early spermatids (at protein level).

Its subcellular location is the secreted. It is found in the extracellular space. It carries out the reaction Release of a C-terminal dipeptide, oligopeptide-|-Xaa-Yaa, when Xaa is not Pro, and Yaa is neither Asp nor Glu. Thus, conversion of angiotensin I to angiotensin II, with increase in vasoconstrictor activity, but no action on angiotensin II.. Its activity is regulated as follows. Inhibited by captopril and, to a lesser extent, by lisinopril, trandolaprilat, fosinoprilat and enalaprilat. Its function is as follows. May be involved in the specific maturation or degradation of a number of bioactive peptides. May play a role in the contractions of the heart, gut and testes, and in spermatid differentiation. The polypeptide is Angiotensin-converting enzyme (Ance) (Drosophila melanogaster (Fruit fly)).